We begin with the raw amino-acid sequence, 400 residues long: Probable cysteine desulfurase (400 aa).

Lys-219 bears the N6-(pyridoxal phosphate)lysine mark. Cys-358 (cysteine persulfide intermediate) is an active-site residue.

It belongs to the class-V pyridoxal-phosphate-dependent aminotransferase family. Csd subfamily. Pyridoxal 5'-phosphate is required as a cofactor.

It carries out the reaction (sulfur carrier)-H + L-cysteine = (sulfur carrier)-SH + L-alanine. In terms of biological role, catalyzes the removal of elemental sulfur and selenium atoms from L-cysteine, L-cystine, L-selenocysteine, and L-selenocystine to produce L-alanine. This Chlamydia muridarum (strain MoPn / Nigg) protein is Probable cysteine desulfurase (csd).